A 1057-amino-acid polypeptide reads, in one-letter code: Carbamoyl phosphate synthase large chain (1057 aa).

Positions 1 to 401 (MPKRDDIQTI…SLLKAIRSLE (401 aa)) are carboxyphosphate synthetic domain. 12 residues coordinate ATP: Arg129, Arg169, Gly175, Gly176, Lys208, Ile210, Glu215, Gly241, Ile242, His243, Gln284, and Glu298. The region spanning 133 to 327 (RTLMNDLNVP…IAKLAAKIAV (195 aa)) is the ATP-grasp 1 domain. 3 residues coordinate Mg(2+): Gln284, Glu298, and Asn300. Gln284, Glu298, and Asn300 together coordinate Mn(2+). The oligomerization domain stretch occupies residues 402-546 (YGVHHLGLPN…YGTYEDENES (145 aa)). The tract at residues 547-929 (IVTDKEKILV…ALYKGLTGSG (383 aa)) is carbamoyl phosphate synthetic domain. Residues 671 to 861 (EALLREISVP…MAQLAMRAIM (191 aa)) enclose the ATP-grasp 2 domain. Positions 707, 746, 748, 752, 777, 778, 779, 780, 820, and 832 each coordinate ATP. Positions 820, 832, and 834 each coordinate Mg(2+). Mn(2+) is bound by residues Gln820, Glu832, and Asn834. The MGS-like domain maps to 930–1057 (FEVKDHGTVL…ESMTFTMRNV (128 aa)). The allosteric domain stretch occupies residues 930-1057 (FEVKDHGTVL…ESMTFTMRNV (128 aa)).

The protein belongs to the CarB family. As to quaternary structure, composed of two chains; the small (or glutamine) chain promotes the hydrolysis of glutamine to ammonia, which is used by the large (or ammonia) chain to synthesize carbamoyl phosphate. Tetramer of heterodimers (alpha,beta)4. The cofactor is Mg(2+). Mn(2+) is required as a cofactor.

It carries out the reaction hydrogencarbonate + L-glutamine + 2 ATP + H2O = carbamoyl phosphate + L-glutamate + 2 ADP + phosphate + 2 H(+). It catalyses the reaction hydrogencarbonate + NH4(+) + 2 ATP = carbamoyl phosphate + 2 ADP + phosphate + 2 H(+). It functions in the pathway amino-acid biosynthesis; L-arginine biosynthesis; carbamoyl phosphate from bicarbonate: step 1/1. The protein operates within pyrimidine metabolism; UMP biosynthesis via de novo pathway; (S)-dihydroorotate from bicarbonate: step 1/3. Its function is as follows. Large subunit of the glutamine-dependent carbamoyl phosphate synthetase (CPSase). CPSase catalyzes the formation of carbamoyl phosphate from the ammonia moiety of glutamine, carbonate, and phosphate donated by ATP, constituting the first step of 2 biosynthetic pathways, one leading to arginine and/or urea and the other to pyrimidine nucleotides. The large subunit (synthetase) binds the substrates ammonia (free or transferred from glutamine from the small subunit), hydrogencarbonate and ATP and carries out an ATP-coupled ligase reaction, activating hydrogencarbonate by forming carboxy phosphate which reacts with ammonia to form carbamoyl phosphate. This is Carbamoyl phosphate synthase large chain from Staphylococcus epidermidis (strain ATCC 35984 / DSM 28319 / BCRC 17069 / CCUG 31568 / BM 3577 / RP62A).